The primary structure comprises 130 residues: Ribosome-binding factor A (130 aa).

Residues 111–130 (RDLDDVGPGATSSDEDAEQR) are disordered.

The protein belongs to the RbfA family. Monomer. Binds 30S ribosomal subunits, but not 50S ribosomal subunits or 70S ribosomes.

It localises to the cytoplasm. In terms of biological role, one of several proteins that assist in the late maturation steps of the functional core of the 30S ribosomal subunit. Associates with free 30S ribosomal subunits (but not with 30S subunits that are part of 70S ribosomes or polysomes). Required for efficient processing of 16S rRNA. May interact with the 5'-terminal helix region of 16S rRNA. The polypeptide is Ribosome-binding factor A (Xanthomonas oryzae pv. oryzae (strain MAFF 311018)).